Consider the following 425-residue polypeptide: MSKIVVAGGTPLCGDVRISGAKNAVLPILSATLLADAPVEISNVPYLHDVITMINLLRELGAGVTMNEGIEAKGRSITVDPRWVRQHMVPYDLVKTMRASVLLLGPLLACYGAAEVALPGGCAIGSRPVDQHIRGLQSLGAEITVENGYIKASVSQGRLKGGRFVFDVVSVTGTENLLMAAAVAQGTSVIENAAMEPEVVDLAECLIALGARIEGAGTPRIVVEGVERLKGGQYAVLPDRIETGTFLVATAMTGGRISMQQVRPQTLDAVLGKLTEAGACIEIGEDSIRLDMQGRRPCSVNLTTAPYPGFPTDMQAQFMALNCVAEGVGVIKETIFENRFMHVDELLRLGAKIQIEGHTAIVQGVERLSGAPVMATDLRASASLILAGLVAEGETIIDRIYHLDRGYENIEGKLGALGASIRRMT.

22–23 (KN) is a phosphoenolpyruvate binding site. R98 contacts UDP-N-acetyl-alpha-D-glucosamine. The active-site Proton donor is C122. Position 122 is a 2-(S-cysteinyl)pyruvic acid O-phosphothioketal (C122). UDP-N-acetyl-alpha-D-glucosamine contacts are provided by residues 127–131 (RPVDQ), D313, and I335.

Belongs to the EPSP synthase family. MurA subfamily.

It localises to the cytoplasm. It catalyses the reaction phosphoenolpyruvate + UDP-N-acetyl-alpha-D-glucosamine = UDP-N-acetyl-3-O-(1-carboxyvinyl)-alpha-D-glucosamine + phosphate. The protein operates within cell wall biogenesis; peptidoglycan biosynthesis. In terms of biological role, cell wall formation. Adds enolpyruvyl to UDP-N-acetylglucosamine. The chain is UDP-N-acetylglucosamine 1-carboxyvinyltransferase from Xylella fastidiosa (strain 9a5c).